We begin with the raw amino-acid sequence, 342 residues long: Transmembrane protein 268 (342 aa).

Residues 1 to 30 (MACEPQVDPGATGPLPPSSPGWSALPGGSP) form a disordered region. Transmembrane regions (helical) follow at residues 105–125 (AFAV…SQMF) and 132–152 (AGML…VLVF).

As to quaternary structure, interacts with ITGAM; this interaction inhibits ITGAM degradation via the endosome-lysosome pathway. Interacts with ITGB4; this interaction prevents ITGB4 degradation.

It is found in the cell membrane. Functionally, stabilizes cell surface expression of ITGAM and participates in the adhesion and migration of phagocytes during bacterial clearance. The polypeptide is Transmembrane protein 268 (Homo sapiens (Human)).